A 156-amino-acid polypeptide reads, in one-letter code: Endogenous retrovirus group K member 24 Pro protein (156 aa).

A Peptidase A2 domain is found at 21–96 (FEGLVDTGAD…IPLNLWGRDL (76 aa)). The active site involves D26. The 46-residue stretch at 111 to 156 (YSPTSQKIMTKMGYIPGKGLGKNEDGIKIPFEAKINQKREGIGYPF) folds into the G-patch domain.

The protein belongs to the peptidase A2 family. HERV class-II K(HML-2) subfamily. In terms of assembly, active as a homodimer. Post-translationally, autoproteolytically processed at the N-terminus. Expected C-terminal autoprocessing not detected. The sequence shown is that of the processed Pro protein.

The catalysed reaction is Processing at the authentic HIV-1 PR recognition site and release of the mature p17 matrix and the p24 capsid protein, as a result of the cleavage of the -SQNY-|-PIVQ- cleavage site.. Functionally, retroviral proteases have roles in processing of the primary translation products and the maturation of the viral particle. Endogenous Pro proteins may have kept, lost or modified their original function during evolution. This endogenous protein has retained most of the characteristics of retroviral proteases. The chain is Endogenous retrovirus group K member 24 Pro protein (ERVK-24) from Homo sapiens (Human).